A 375-amino-acid polypeptide reads, in one-letter code: Alcohol dehydrogenase 3, mitochondrial (375 aa).

The N-terminal 24 residues, 1 to 24, are a transit peptide targeting the mitochondrion; the sequence is MLRTSTLFTRRVQPSLFSRNILRL. Residue cysteine 71 coordinates Zn(2+). Residues histidine 72, threonine 73, and histidine 76 each coordinate NAD(+). The Zn(2+) site is built by histidine 94, glutamate 95, cysteine 125, cysteine 128, cysteine 131, cysteine 139, and cysteine 181. NAD(+) is bound by residues glycine 208, glycine 209, leucine 210, aspartate 229, lysine 234, phenylalanine 249, valine 296, serine 321, valine 323, and arginine 368.

The protein belongs to the zinc-containing alcohol dehydrogenase family. As to quaternary structure, homotetramer. Requires Zn(2+) as cofactor.

The protein resides in the mitochondrion matrix. The protein localises to the mitochondrion inner membrane. The enzyme catalyses a primary alcohol + NAD(+) = an aldehyde + NADH + H(+). It carries out the reaction a secondary alcohol + NAD(+) = a ketone + NADH + H(+). It catalyses the reaction ethanol + NAD(+) = acetaldehyde + NADH + H(+). The catalysed reaction is butan-1-ol + NAD(+) = butanal + NADH + H(+). The enzyme catalyses hexan-1-ol + NAD(+) = hexanal + NADH + H(+). Functionally, mitochondrial isozyme that reduces acetaldehyde to ethanol during the fermentation of glucose. Involved in the shuttling of mitochondrial reducing equivalents to the cytosol, where the redox balance is restored by NADH dehydrogenases on the external side of the mitochondrial inner membrane. Shows a high affinity for alcohols with a double bond conjugated to the alcohol group. This is Alcohol dehydrogenase 3, mitochondrial (ADH3) from Saccharomyces cerevisiae (strain ATCC 204508 / S288c) (Baker's yeast).